The sequence spans 158 residues: Snaclec alboaggregin-D subunit alpha (158 aa).

The signal sequence occupies residues 1–23 (MGRFIFGSFGLLVVFLSLSGTGA). Intrachain disulfides connect cysteine 27-cysteine 38, cysteine 55-cysteine 152, and cysteine 127-cysteine 144. Positions 34–153 (YDRYCYQAFS…CAELNPFICK (120 aa)) constitute a C-type lectin domain.

The protein belongs to the snaclec family. In terms of assembly, tetramer of heterodimers of alpha and beta subunits (alphabeta)(4); disulfide-linked. In terms of tissue distribution, expressed by the venom gland.

The protein resides in the secreted. Snaclec that induces human platelet aggregation in the absence of any cofactor with the EC(50) of 0.25 nM and causes tyrosine phosphorylation in human platelets. Antibodies against either platelet GPIbalpha (GP1BA) or GPVI (GP6) inhibit alboaggregin D-induced platelet aggregation. Only the combination of these two antibodies completely inhibit aggregation, suggesting that it acts through both GPIbalpha (GP1BA) and GPVI (GP6). The protein is Snaclec alboaggregin-D subunit alpha of Trimeresurus albolabris (White-lipped pit viper).